Consider the following 414-residue polypeptide: 3-phosphoshikimate 1-carboxyvinyltransferase (414 aa).

3 residues coordinate 3-phosphoshikimate: lysine 20, serine 21, and arginine 25. Lysine 20 is a binding site for phosphoenolpyruvate. Arginine 113 provides a ligand contact to phosphoenolpyruvate. Residues serine 154, serine 155, glutamine 156, serine 181, aspartate 296, and lysine 323 each coordinate 3-phosphoshikimate. Glutamine 156 lines the phosphoenolpyruvate pocket. The Proton acceptor role is filled by aspartate 296. The phosphoenolpyruvate site is built by arginine 327, arginine 371, and lysine 395.

This sequence belongs to the EPSP synthase family. As to quaternary structure, monomer.

It is found in the cytoplasm. The enzyme catalyses 3-phosphoshikimate + phosphoenolpyruvate = 5-O-(1-carboxyvinyl)-3-phosphoshikimate + phosphate. Its pathway is metabolic intermediate biosynthesis; chorismate biosynthesis. Catalyzes the transfer of the enolpyruvyl moiety of phosphoenolpyruvate (PEP) to the 5-hydroxyl of shikimate-3-phosphate (S3P) to produce enolpyruvyl shikimate-3-phosphate and inorganic phosphate. The chain is 3-phosphoshikimate 1-carboxyvinyltransferase from Saccharolobus solfataricus (strain ATCC 35092 / DSM 1617 / JCM 11322 / P2) (Sulfolobus solfataricus).